Reading from the N-terminus, the 282-residue chain is Aspergillopepsin-2 (282 aa).

Positions 1–18 (MKFSTILTGSLFATAALA) are cleaved as a signal peptide. 2 propeptides span residues 19–59 (APLT…GTTN) and 99–109 (GGGYGYWKNKR). A compositionally biased stretch (basic residues) spans 27–39 (ARKEARAAGKRHS). Positions 27–46 (ARKEARAAGKRHSNPPYIPG) are disordered. Glutamine 110 is subject to Pyrrolidone carboxylic acid. 2 cysteine pairs are disulfide-bonded: cysteine 115/cysteine 139 and cysteine 127/cysteine 210.

This sequence belongs to the peptidase G1 family. Heterodimer of two noncovalently bound light and heavy chains.

It catalyses the reaction Preferential cleavage in B chain of insulin: 3-Asn-|-Gln-4, 13-Gly-|-Ala-14, and 26-Tyr-|-Thr-27.. This Aspergillus niger protein is Aspergillopepsin-2.